The following is a 393-amino-acid chain: Lipid-A-disaccharide synthase (393 aa).

Belongs to the LpxB family.

The catalysed reaction is a lipid X + a UDP-2-N,3-O-bis[(3R)-3-hydroxyacyl]-alpha-D-glucosamine = a lipid A disaccharide + UDP + H(+). It functions in the pathway bacterial outer membrane biogenesis; LPS lipid A biosynthesis. Condensation of UDP-2,3-diacylglucosamine and 2,3-diacylglucosamine-1-phosphate to form lipid A disaccharide, a precursor of lipid A, a phosphorylated glycolipid that anchors the lipopolysaccharide to the outer membrane of the cell. The sequence is that of Lipid-A-disaccharide synthase from Rhodopseudomonas palustris (strain HaA2).